We begin with the raw amino-acid sequence, 632 residues long: Palmitoyltransferase ZDHHC17 (632 aa).

Residues 1–304 lie on the Cytoplasmic side of the membrane; it reads MQREEGFNTK…LKADKEFRQK (304 aa). Residues 11–305 are necessary and sufficient for interaction with DNAJC5 and SNAP25; the sequence is MADGPDEYET…KADKEFRQKV (295 aa). 7 ANK repeats span residues 51–86, 89–118, 123–152, 156–185, 189–219, 224–253, and 257–286; these read THID…VRQP, ENVT…IVDQ, LNST…DPSL, EGCS…DVDM, NGMT…SVNL, HKNT…NVDA, and KGES…AKGY. The next 2 helical transmembrane spans lie at 305–325 and 326–346; these read VMLG…DLDI and DSWL…QFLS. Over 347-357 the chain is Cytoplasmic; sequence KSFFDHSMHSA. A helical transmembrane segment spans residues 358–378; it reads LPLGIYLATKFWMYVTWFFWF. The Lumenal portion of the chain corresponds to 379-381; it reads WND. Residues 382-402 form a helical membrane-spanning segment; it reads LNFLFIHLPFLANSVALFYNF. The Cytoplasmic portion of the chain corresponds to 403-480; sequence GKSWKSDPGI…GNCVGAGNHR (78 aa). A DHHC domain is found at 437–487; the sequence is IFCSTCLIRKPVRSKHCGVCNRCIAKFDHHCPWVGNCVGAGNHRYFMGYLF. The active-site S-palmitoyl cysteine intermediate is cysteine 467. The helical transmembrane segment at 481–501 threads the bilayer; it reads YFMGYLFFLLFMICWMIYGCV. The Lumenal portion of the chain corresponds to 502 to 529; sequence SYWGLHCETTYTKDGFWTYITQIATCSP. The helical transmembrane segment at 530 to 550 threads the bilayer; it reads WMFWMFLNSVFHFLWVAVLLM. Residues 551–632 lie on the Cytoplasmic side of the membrane; it reads CQLYQITCLG…QISGSGYQLV (82 aa).

The protein belongs to the DHHC palmitoyltransferase family. AKR/ZDHHC17 subfamily. In terms of assembly, interacts (via ANK repeats) with numerous proteins (via the consensus sequence motif [VIAP]-[VIT]-x-x-Q-P). Interacts (via ANK repeats) with CLIP3. Interacts (via ANK repeats) with HTT. Interacts (via ANK repeats) with DNAJC5 (via C-terminus). Interacts (via ANK repeats) with MAP6. Interacts (via ANK repeats) with SNAP23. Interacts (via ANK repeats) with SNAP25. Interacts (via ANK repeats) with EVL. Interacts with SPRED1 and SPRED3. Interacts with GPM6A and OPTN. May interact (via ANK repeats) with SPRED2. May interact with NTRK1; may regulate its localization and function. Post-translationally, autopalmitoylated. Autopalmitoylation has a regulatory role in ZDHHC17-mediated Mg(2+) transport. As to expression, expressed in liver, testis, kidney, heart, pancreas and brain. Highest expression was seen in the brain. Localized predominantly in the perinuclear regions of neurons from the cortex, striatum and hippocampus. Colocalized with HTT in the medium spiny neurons of the striatum and the spiny neurons that project into the globus pallidus.

It is found in the golgi apparatus membrane. The protein resides in the cytoplasmic vesicle membrane. Its subcellular location is the presynaptic cell membrane. The catalysed reaction is L-cysteinyl-[protein] + hexadecanoyl-CoA = S-hexadecanoyl-L-cysteinyl-[protein] + CoA. It catalyses the reaction L-cysteinyl-[protein] + tetradecanoyl-CoA = S-tetradecanoyl-L-cysteinyl-[protein] + CoA. It carries out the reaction L-cysteinyl-[protein] + octadecanoyl-CoA = S-octadecanoyl-L-cysteinyl-[protein] + CoA. In terms of biological role, palmitoyltransferase that catalyzes the addition of palmitate onto various protein substrates and is involved in a variety of cellular processes. Has no stringent fatty acid selectivity and in addition to palmitate can also transfer onto target proteins myristate from tetradecanoyl-CoA and stearate from octadecanoyl-CoA. Palmitoyltransferase specific for a subset of neuronal proteins, including SNAP25, DLG4/PSD95, GAD2, SYT1 and HTT. Also palmitoylates neuronal protein GPM6A as well as SPRED1 and SPRED3. Could also play a role in axonogenesis through the regulation of NTRK1 and the downstream ERK1/ERK2 signaling cascade. May be involved in the sorting or targeting of critical proteins involved in the initiating events of endocytosis at the plasma membrane. May play a role in Mg(2+) transport. Could also palmitoylate DNAJC5 and regulate its localization to the Golgi membrane. Palmitoylates CASP6, thereby preventing its dimerization and subsequent activation. This chain is Palmitoyltransferase ZDHHC17, found in Mus musculus (Mouse).